Here is a 214-residue protein sequence, read N- to C-terminus: Adenylate kinase (214 aa).

15-20 serves as a coordination point for ATP; that stretch reads GAGKGT. An NMP region spans residues 35 to 64; that stretch reads ASGDLFREAIKNQSVIGRKIAAIISQGGYV. Residues S36, R41, 62 to 64, 90 to 93, and Q97 contribute to the AMP site; these read GYV and GYPR. The tract at residues 127–164 is LID; that stretch reads NRVICNNCNSVYNLLFQKPLVENSCDQCSAKLVKRSDD. Residue R128 participates in ATP binding. Zn(2+)-binding residues include C131 and C134. Residue 137 to 138 coordinates ATP; the sequence is VY. Zn(2+)-binding residues include C151 and C154. Residues R161 and R172 each coordinate AMP. L200 provides a ligand contact to ATP.

This sequence belongs to the adenylate kinase family. As to quaternary structure, monomer.

It localises to the cytoplasm. The catalysed reaction is AMP + ATP = 2 ADP. The protein operates within purine metabolism; AMP biosynthesis via salvage pathway; AMP from ADP: step 1/1. In terms of biological role, catalyzes the reversible transfer of the terminal phosphate group between ATP and AMP. Plays an important role in cellular energy homeostasis and in adenine nucleotide metabolism. The polypeptide is Adenylate kinase (Mycoplasma genitalium (strain ATCC 33530 / DSM 19775 / NCTC 10195 / G37) (Mycoplasmoides genitalium)).